The primary structure comprises 914 residues: MSAFRNHCPHLDSVGEITKEDLIQKSQGTCQDCKVRGPNLWACLENRCSYVGCGESQVDHSTIHSQETKHYLTVNLTTLRVWCYACSKEVFLDRKLGTQPSLPHVRQPHQIQENSVQDFKIPSNTTLKTPLVAVFDDLDIEVDEEDELRARGLTGLKNIGNTCYMNAALQALSNCPPLTQFFLDCGGLARTDKKPAICKSYLKLMTELWHKSRPGSVVPTNLFQGIKTVNPTFRGYSQQDAQEFLRCLMDLLHEELKEQVMEVEDPQTITTEETMEEDKSQSDVDFQSCESCSNSDKAENENGSSCFSEDNNETTMLIQDDENNSEMSKDWQKEKMCNKINKVNSEGELDKDRDSISETVDLNNQETVKVQIHSRASEYITDVHSNDLSTPQILPSNESINPRLSASPPKSGNLWPGLAPPHKKAQSASPKRKKQHKKYRSVISDIFDGTIISSVQCLTCDRVSVTLETFQDLSLPIPGKEDLAKLHSSSHPTSIVKAGSCGEAYAPQGWIAFFMEYVKRFVVSCVPSWFWGPVVTLQDCLAAFFARDELKGDNMYSCEKCKKLRNGVKFCKVQKFPEILCIHLKRFRHELMFSTKISTHVSFPLEGLDLQPFLAKDSPAQIVTYDLLSVICHHGTASSGHYIAYCRNNLNNLWYEFDDQSVTEVSESTVQNAEAYVLFYRKSSEEAQKERRRISNLLNIMEPSLLQFYISRQWLNKFKTFAEPGPISNNDFLCIHGGVPPRKAGYIEDLVLMLPQNIWDNLYSRYGGGPAVNHLYICHTCQIEAEEIEKKKKNRRKTELEIFIRLNRAFQKEDSPATFYCISMQWFREWESFVKGKDGDPPGPIDNTKIAVTKCGSVMLRQGADSGQISEETWNFLQSIYGGGPEVILRPPVVHVDPDILQAEEKIEVETRSL.

The UBP-type zinc finger occupies 6–109 (NHCPHLDSVG…PSLPHVRQPH (104 aa)). 12 residues coordinate Zn(2+): cysteine 8, histidine 10, cysteine 30, cysteine 33, cysteine 43, cysteine 48, cysteine 53, histidine 60, histidine 64, histidine 70, cysteine 83, and cysteine 86. Positions 154–683 (TGLKNIGNTC…EAYVLFYRKS (530 aa)) constitute a USP domain. Cysteine 163 functions as the Nucleophile in the catalytic mechanism. A disordered region spans residues 266-313 (PQTITTEETMEEDKSQSDVDFQSCESCSNSDKAENENGSSCFSEDNNE). Over residues 283-313 (DVDFQSCESCSNSDKAENENGSSCFSEDNNE) the composition is skewed to polar residues. Serine 345 and serine 407 each carry phosphoserine. Polar residues predominate over residues 387-410 (DLSTPQILPSNESINPRLSASPPK). Residues 387 to 437 (DLSTPQILPSNESINPRLSASPPKSGNLWPGLAPPHKKAQSASPKRKKQHK) form a disordered region. Residues 421-437 (PHKKAQSASPKRKKQHK) show a composition bias toward basic residues. The Proton acceptor role is filled by histidine 641. 2 DUSP domains span residues 685 to 778 (EEAQ…LYIC) and 786 to 893 (EEIE…RPPV).

The protein belongs to the peptidase C19 family. USP20/USP33 subfamily. In terms of assembly, interacts with VHL, leading to its ubiquitination and subsequent degradation. Interacts with ARRB1 and ARRB2. Interacts with ADRB2. Interacts with DIO2. Interacts with ROBO1. Interacts with SELENBP1; in a selenium-dependent manner. Interacts with CCP110. Ubiquitinated via a VHL-dependent pathway for proteasomal degradation.

It is found in the cytoplasm. The protein localises to the perinuclear region. It localises to the cytoskeleton. Its subcellular location is the microtubule organizing center. The protein resides in the centrosome. The catalysed reaction is Thiol-dependent hydrolysis of ester, thioester, amide, peptide and isopeptide bonds formed by the C-terminal Gly of ubiquitin (a 76-residue protein attached to proteins as an intracellular targeting signal).. Functionally, deubiquitinating enzyme involved in various processes such as centrosome duplication, cellular migration and beta-2 adrenergic receptor/ADRB2 recycling. Involved in regulation of centrosome duplication by mediating deubiquitination of CCP110 in S and G2/M phase, leading to stabilize CCP110 during the period which centrioles duplicate and elongate. Involved in cell migration via its interaction with intracellular domain of ROBO1, leading to regulate the Slit signaling. Plays a role in commissural axon guidance cross the ventral midline of the neural tube in a Slit-dependent manner, possibly by mediating the deubiquitination of ROBO1. Acts as a regulator of G-protein coupled receptor (GPCR) signaling by mediating the deubiquitination of beta-arrestins (ARRB1 and ARRB2) and beta-2 adrenergic receptor (ADRB2). Plays a central role in ADRB2 recycling and resensitization after prolonged agonist stimulation by constitutively binding ADRB2, mediating deubiquitination of ADRB2 and inhibiting lysosomal trafficking of ADRB2. Upon dissociation, it is probably transferred to the translocated beta-arrestins, leading to beta-arrestins deubiquitination and disengagement from ADRB2. This suggests the existence of a dynamic exchange between the ADRB2 and beta-arrestins. Deubiquitinates DIO2, thereby regulating thyroid hormone regulation. Mediates deubiquitination of both 'Lys-48'- and 'Lys-63'-linked polyubiquitin chains. The protein is Ubiquitin carboxyl-terminal hydrolase 33 (USP33) of Pongo abelii (Sumatran orangutan).